The following is a 906-amino-acid chain: Protein translocase subunit SecA (906 aa).

Residues glutamine 89, 107 to 111 (GEGKT), and aspartate 502 contribute to the ATP site. A disordered region spans residues 868 to 887 (VPPAQRDPADPRTWGKVSRN). The Zn(2+) site is built by cysteine 890, cysteine 892, cysteine 901, and histidine 902.

It belongs to the SecA family. In terms of assembly, monomer and homodimer. Part of the essential Sec protein translocation apparatus which comprises SecA, SecYEG and auxiliary proteins SecDF-YajC and YidC. It depends on Zn(2+) as a cofactor.

The protein localises to the cell inner membrane. The protein resides in the cytoplasm. It carries out the reaction ATP + H2O + cellular proteinSide 1 = ADP + phosphate + cellular proteinSide 2.. Functionally, part of the Sec protein translocase complex. Interacts with the SecYEG preprotein conducting channel. Has a central role in coupling the hydrolysis of ATP to the transfer of proteins into and across the cell membrane, serving both as a receptor for the preprotein-SecB complex and as an ATP-driven molecular motor driving the stepwise translocation of polypeptide chains across the membrane. This is Protein translocase subunit SecA from Brucella melitensis biotype 1 (strain ATCC 23456 / CCUG 17765 / NCTC 10094 / 16M).